The chain runs to 522 residues: Protein GDS1 (522 aa).

Disordered regions lie at residues 56-88 (ALDD…PKKD), 222-268 (QQLE…SSNS), 300-391 (LSPS…SHNA), and 433-489 (STQT…SRNE). A compositionally biased stretch (polar residues) spans 62-73 (LAGSSFSSSQEI). Basic and acidic residues predominate over residues 74–88 (KATKPKKDFGAPKKD). Composition is skewed to polar residues over residues 222–236 (QQLE…FNSN), 244–260 (SSNQ…SMTD), 300–314 (LSPS…LLTP), and 355–366 (SQSLSVLSTPKK). Over residues 368–378 (SSASLSTFASS) the composition is skewed to low complexity. The segment covering 379-391 (KNISPDSSLSHNA) has biased composition (polar residues). The segment covering 439–467 (ESSSESSQYNSSSSSPVNSAAASSAESLS) has biased composition (low complexity). The segment covering 468 to 489 (DINSSQDNGRESNPSSQESRNE) has biased composition (polar residues).

In terms of biological role, involved in nuclear control of mitochondria. The sequence is that of Protein GDS1 (GDS1) from Saccharomyces cerevisiae (strain ATCC 204508 / S288c) (Baker's yeast).